The chain runs to 1066 residues: Beta-galactosidase (1066 aa).

Positions 110 and 209 each coordinate substrate. Na(+) is bound at residue Asp-209. Glu-432, His-434, and Glu-477 together coordinate Mg(2+). Residues Glu-477 and 553 to 556 (EYAH) contribute to the substrate site. Glu-477 serves as the catalytic Proton donor. Residue Glu-553 is the Nucleophile of the active site. Mg(2+) is bound at residue Asn-613. Phe-617 and Asn-620 together coordinate Na(+). Substrate contacts are provided by Asn-620 and Trp-1041.

Belongs to the glycosyl hydrolase 2 family. In terms of assembly, homotetramer. The cofactor is Mg(2+). Na(+) serves as cofactor.

It carries out the reaction Hydrolysis of terminal non-reducing beta-D-galactose residues in beta-D-galactosides.. The sequence is that of Beta-galactosidase from Yersinia pseudotuberculosis serotype O:1b (strain IP 31758).